A 2437-amino-acid chain; its full sequence is Polyprotein P1234 (2437 aa).

An Alphavirus-like MT domain is found at 28–259 (EAQQVTPNDH…ESRRLLKSWH (232 aa)). The nsP1 membrane-binding stretch occupies residues 244–263 (GSTLYIESRRLLKSWHLPSV). Residues cysteine 417 and cysteine 419 are each lipidated (S-palmitoyl cysteine; by host). In terms of domain architecture, (+)RNA virus helicase ATP-binding spans 691 to 843 (DLINPPFHEF…HNICTEVDHK (153 aa)). 722–729 (GVPGSGKS) lines the a ribonucleoside 5'-triphosphate pocket. A (+)RNA virus helicase C-terminal domain is found at 844–992 (SISRRCTLPI…LEDWQREHDT (149 aa)). The Peptidase C9 domain occupies 1005 to 1327 (DVFQNKAKVC…GKLSSIYAGT (323 aa)). Positions 1006–1025 (VFQNKAKVCWAKCLVPVLET) are nucleolus localization signal. The active-site For cysteine protease nsP2 activity is the cysteine 1014. The short motif at 1059-1068 (TKIYGVDLDS) is the Nuclear export signal element. Histidine 1084 acts as the For cysteine protease nsP2 activity in catalysis. The Nuclear localization signal signature appears at 1182 to 1186 (PRRKV). Residues 1335–1493 (APAYAVKRAD…QKIKTVLQNR (159 aa)) form the Macro domain. ADP-D-ribose is bound by residues aspartate 1344, asparagine 1358, glycine 1366, glycine 1446, isoleucine 1447, and phenylalanine 1448. Zn(2+) contacts are provided by cysteine 1596, cysteine 1598, cysteine 1621, and cysteine 1639. A compositionally biased stretch (low complexity) spans 1675–1684 (TSDSSSLSTF). The tract at residues 1675-1729 (TSDSSSLSTFPDLESAEELDHDSQSVRPALNEPDDHQPTPTAELATHPVPPPRPN) is disordered. 2 consecutive short sequence motifs (FGDF; binding to host G3BP1) follow at residues 1792 to 1795 (FGAP) and 1804 to 1807 (FGDF). The 116-residue stretch at 2191–2306 (DHVLETDIAS…HGVVSDKLMA (116 aa)) folds into the RdRp catalytic domain.

As to quaternary structure, interacts with non-structural protein 3. Interacts with RNA-directed RNA polymerase nsP4. Interacts with protease nsP2. interacts with itself. In terms of assembly, interacts with mRNA-capping enzyme nsP1. Interacts with host DDX1. Interacts with host DDX3. Interacts (via C-terminus) with host G3BP1; this interaction inhibits the formation of host stress granules on viral mRNAs and the nsp3-G3BP1 complexes bind viral RNAs and probably orchestrate the assembly of viral replication complexes. Interacts (via C-terminus) with host G3BP2; this interaction inhibits the formation of host stress granules on viral mRNAs and the nsp3-G3BP2 complexes bind viral RNAs and probably orchestrate the assembly of viral replication complexes. Interacts with mRNA-capping enzyme nsP1. Interacts with protease nsP2. interacts with itself. As to quaternary structure, interacts with RNA-directed RNA polymerase nsP4. Interacts with mRNA-capping enzyme nsP1. Interacts with KPNA1/karyopherin-alpha1; this interaction probably allows the active transport of protease nsP2 into the host nucleus. Interacts with host POLR2A/RPB1; this interaction seems to induce the depletion of host POLR2A and may play a role in the transcriptional shutoff induced by protease nsP2. Interacts with host GTF2E2/TF2E2; this interaction seems to induce the depletion of host GTF2E2/TF2E2 and may play a role in the transcriptional shutoff induced by protease nsP2. Mg(2+) is required as a cofactor. The cofactor is Mn(2+). Post-translationally, specific enzymatic cleavages in vivo yield mature proteins. The processing of the polyprotein is temporally regulated. In early stages (1.7 hpi), P1234 is first cleaved in trans through its nsP2 protease activity, releasing P123' and nsP4, which associate to form the early replication complex. At the same time, P1234 is also cut at the nsP1/nsP2 site early in infection but with lower efficiency. After replication of the viral minus-strand RNAs (4 hpi), the polyproteins are cut at the nsP1/nsP2 and nsP2/nsP3 sites very efficiently, preventing accumulation of P123' and P1234 and allowing the formation of the late replication complex. NsP3'/nsP4 site is not cleaved anymore and P34 is produced rather than nsP4. In terms of processing, specific enzymatic cleavages in vivo yield mature proteins. The processing of the polyprotein is temporally regulated. In early stages (1.7 hpi), P123 is cleaved at the nsP1/nsP2 site with low efficiency. After replication of the viral minus-strand RNAs (4 hpi), the polyproteins are cut at the nsP1/nsP2 and nsP2/nsP3 sites very efficiently, preventing accumulation of P123 and allowing the formation of the late replication complex. Specific enzymatic cleavages in vivo yield mature proteins. The processing of the polyprotein is temporally regulated. In early stages (1.7 hpi), P123' is cleaved at the nsP1/nsP2 site with low efficiency. After replication of the viral minus-strand RNAs (4 hpi), the polyproteins are cut at the nsP1/nsP2 and nsP2/nsP3 sites very efficiently, preventing accumulation of P123' and allowing the formation of the late replication complex. Post-translationally, palmitoylated by host palmitoyltransferases ZDHHC2 and ZDHHC19. In terms of processing, phosphorylated by host on serines and threonines. Ubiquitinated; targets the protein for rapid degradation via the ubiquitin system. Nsp4 is present in extremely low quantities due to low frequency of translation through the amber stop-codon and the degradation by the ubiquitin pathway.

It localises to the host cytoplasmic vesicle membrane. The protein localises to the host cell membrane. It is found in the host cell projection. Its subcellular location is the host filopodium. The protein resides in the host nucleus. It localises to the host cytoplasm. It catalyses the reaction GTP + S-adenosyl-L-methionine = N(7)-methyl-GTP + S-adenosyl-L-homocysteine. The catalysed reaction is N(7)-methyl-GTP + L-histidyl-[protein] = N(tele)-(N(7)-methylguanosine 5'-phospho)-L-histidyl-[protein] + diphosphate. The enzyme catalyses N(tele)-(N(7)-methylguanosine 5'-phospho)-L-histidyl-[protein] + a 5'-end diphospho-(purine-ribonucleoside) in mRNA + H(+) = a 5'-end (N(7)-methyl 5'-triphosphoguanosine)-(purine-ribonucleoside) in mRNA + L-histidyl-[protein]. It carries out the reaction a 5'-end triphospho-ribonucleoside in mRNA + H2O = a 5'-end diphospho-ribonucleoside in mRNA + phosphate + H(+). It catalyses the reaction a ribonucleoside 5'-triphosphate + H2O = a ribonucleoside 5'-diphosphate + phosphate + H(+). The catalysed reaction is ATP + H2O = ADP + phosphate + H(+). The enzyme catalyses RNA(n) + a ribonucleoside 5'-triphosphate = RNA(n+1) + diphosphate. It carries out the reaction RNA(n) + ATP = RNA(n)-3'-adenine ribonucleotide + diphosphate. It catalyses the reaction 4-O-(ADP-D-ribosyl)-L-aspartyl-[protein] + H2O = L-aspartyl-[protein] + ADP-D-ribose + H(+). The catalysed reaction is 5-O-(ADP-D-ribosyl)-L-glutamyl-[protein] + H2O = L-glutamyl-[protein] + ADP-D-ribose + H(+). The enzyme catalyses ADP-alpha-D-ribose 1''-phosphate + H2O = ADP-D-ribose + phosphate. In terms of biological role, inactive precursor of the viral replicase, which is activated by cleavages carried out by the viral protease nsP2. Functionally, the early replication complex formed by the polyprotein P123 and nsP4 synthesizes minus-strand RNAs. As soon P123 is cleaved into mature proteins, the plus-strand RNAs synthesis begins. The early replication complex formed by the polyprotein P123' and nsP4 synthesizes minus-strand RNAs. Polyprotein P123' is a short-lived polyprotein that accumulates during early stage of infection. As soon P123' is cleaved into mature proteins, the plus-strand RNAs synthesis begins. Its function is as follows. Cytoplasmic capping enzyme that catalyzes two virus-specific reactions: methyltransferase and nsP1 guanylyltransferase. mRNA-capping is necessary since all viral RNAs are synthesized in the cytoplasm, and host capping enzymes are restricted to the nucleus. The enzymatic reaction involves a covalent link between 7-methyl-GMP and nsP1, whereas eukaryotic capping enzymes form a covalent complex only with GMP. nsP1 capping consists in the following reactions: GTP is first methylated into 7-methyl-GMP and then is covalently linked to nsP1 to form the m7GMp-nsP1 complex from which 7-methyl-GMP complex is transferred to the mRNA to create the cap structure. NsP1 is needed for the initiation of the minus-strand RNAs synthesis. Probably serves as a membrane anchor for the replication complex composed of nsP1-nsP4. Palmitoylated nsP1 is remodeling host cell cytoskeleton, and induces filopodium-like structure formation at the surface of the host cell. In terms of biological role, multifunctional protein whose N-terminus is part of the RNA polymerase complex and displays NTPase, RNA triphosphatase and helicase activities. NTPase and RNA triphosphatase are involved in viral RNA capping and helicase keeps a check on the dsRNA replication intermediates. The C-terminus harbors a protease that specifically cleaves the polyproteins and releases the mature proteins. Required for the shutoff of minus-strand RNAs synthesis. Specifically inhibits the host IFN response by promoting the nuclear export of host STAT1. Induces host transcription shutoff by inducing rapid proteasome-dependent degradation of POLR2A, a catalytic subunit of the RNAPII complex. The resulting inhibition of cellular protein synthesis serves to ensure maximal viral gene expression and to evade host immune response. Functionally, seems to be essential for minus-strand RNAs and subgenomic 26S mRNAs synthesis. Displays mono-ADP-ribosylhydrolase activity. ADP-ribosylation is a post-translational modification that controls various processes of the host cell and the virus probably needs to revert it for optimal viral replication. Binds proteins of FXR family and sequesters them into the viral RNA replication complexes thereby inhibiting the formation of host stress granules on viral mRNAs. The nsp3'-FXR complexes bind viral RNAs and probably orchestrate the assembly of viral replication complexes, thanks to the ability of FXR family members to self-assemble and bind DNA. Seems to be essential for minus-strand RNAs and subgenomic 26S mRNAs synthesis. Displays mono-ADP-ribosylhydrolase activity. ADP-ribosylation is a post-translantional modification that controls various processes of the host cell and the virus probably needs to revert it for optimal viral replication. Binds proteins of G3BP family and sequesters them into the viral RNA replication complexes thereby inhibiting the formation of host stress granules on viral mRNAs. The nsp3-G3BP complexes bind viral RNAs and probably orchestrate the assembly of viral replication complexes, thanks to the ability of G3BP family members to self-assemble and bind DNA. Its function is as follows. RNA dependent RNA polymerase. Replicates genomic and antigenomic RNA by recognizing replications specific signals. The early replication complex formed by the polyprotein P123 and nsP4 synthesizes minus-strand RNAs. The late replication complex composed of fully processed nsP1-nsP4 is responsible for the production of genomic and subgenomic plus-strand RNAs. The core catalytic domain of nsP4 also possesses terminal adenylyltransferase (TATase) activity that is probably involved in maintenance and repair of the poly(A) tail, an element required for replication of the viral genome. The protein is Polyprotein P1234 of Aedes aegypti (Yellowfever mosquito).